Here is a 285-residue protein sequence, read N- to C-terminus: Flagellar filament 30.7 kDa core protein (285 aa).

The protein belongs to the bacterial flagellin family. In terms of assembly, the core of the flagellum consists of several antigenically related polypeptides. Post-translationally, glycosylated. Glycosylation is not essential for motility.

It is found in the periplasmic flagellum. The protein resides in the periplasm. Component of the core of the flagella. This is Flagellar filament 30.7 kDa core protein (flaB3) from Treponema maltophilum.